The sequence spans 512 residues: MSLAWRTLQKAFYLETSLRILQMRPSLSCASRIYVPKLTLHTKHNMPPCDFSPEKYQSLAYNHVLEIHKQHLSPVNTAYFQKPLLLHQGHMEWLFDSEGNRYLDFFSGIVTVGVGHCHPKVTAVAKKQMDRLWHTSSVFFHSPMHEYAERLSALLPEPLKVIFLVNSGSEANDLAMVMARAYSNHTDIISFRGAYHGCSPYTLGLTNVGIYKMKVPSTIACQSTMCPDVFRGPWGGSHCRDSPVQTVRKCSCAPDGCQAKERYIEQFKDTLNTSVATSIAGFFAEPIQGVNGVVQYPKEFLKEAFALVRERGGVCIADEVQTGFGRLGSHFWGFQTHDTMPDIVTMAKGIGNGFPMAAVVTTPEIASSLAKHLHHFSTFGGSPLACAIGSAVLEVIEEENLQRNSQEVGTYMLLKFAKLRDEFDIVGDVRGKGLMVGIEMVQDKISRQPLPKTEVNQIHEDCKDMGLLVGRGGNFSQTFRIAPPMRVTKLEVDFAFEVFRSALTQHMERRAK.

Residues 1–39 constitute a mitochondrion transit peptide; that stretch reads MSLAWRTLQKAFYLETSLRILQMRPSLSCASRIYVPKLT. Lysine 55 carries the post-translational modification N6-acetyllysine. At lysine 69 the chain carries N6-acetyllysine; alternate. Lysine 69 carries the post-translational modification N6-succinyllysine; alternate. Lysine 82 bears the N6-acetyllysine mark. Lysine 260 is subject to N6-acetyllysine; alternate. Lysine 260 bears the N6-succinyllysine; alternate mark. Position 302 is an N6-succinyllysine (lysine 302). Lysine 348 is modified (N6-(pyridoxal phosphate)lysine). N6-acetyllysine; alternate occurs at positions 415 and 418. N6-succinyllysine; alternate is present on residues lysine 415 and lysine 418. Lysine 452 bears the N6-acetyllysine mark.

Belongs to the class-III pyridoxal-phosphate-dependent aminotransferase family. Homotetramer. Requires pyridoxal 5'-phosphate as cofactor. Expressed in the liver, lung and kidney.

Its subcellular location is the mitochondrion. It carries out the reaction glyoxylate + L-alanine = glycine + pyruvate. The catalysed reaction is (R)-3-amino-2-methylpropanoate + pyruvate = 2-methyl-3-oxopropanoate + L-alanine. It catalyses the reaction 3-oxopropanoate + L-alanine = beta-alanine + pyruvate. The enzyme catalyses 2-oxobutanoate + L-alanine = (2S)-2-aminobutanoate + pyruvate. It carries out the reaction N(omega),N(omega)-dimethyl-L-arginine + pyruvate = 5-(3,3-dimethylguanidino)-2-oxopentanoate + L-alanine. The catalysed reaction is N(omega),N('omega)-dimethyl-L-arginine + pyruvate = 5-(3,3'-dimethylguanidino)-2-oxopentanoate + L-alanine. It catalyses the reaction N(omega),N(omega)-dimethyl-L-arginine + glyoxylate = 5-(3,3-dimethylguanidino)-2-oxopentanoate + glycine. The enzyme catalyses N(omega),N('omega)-dimethyl-L-arginine + glyoxylate = 5-(3,3'-dimethylguanidino)-2-oxopentanoate + glycine. It carries out the reaction N(omega)-methyl-L-arginine + pyruvate = 5-(3-methylguanidino)-2-oxopentanoate + L-alanine. The catalysed reaction is N(omega)-methyl-L-arginine + glyoxylate = 5-(3-methylguanidino)-2-oxopentanoate + glycine. It catalyses the reaction L-ornithine + pyruvate = 5-amino-2-oxopentanoate + L-alanine. The enzyme catalyses L-ornithine + glyoxylate = 5-amino-2-oxopentanoate + glycine. It carries out the reaction (2S)-2-aminobutanoate + glyoxylate = 2-oxobutanoate + glycine. The catalysed reaction is N(omega),N(omega)-dimethyl-L-arginine + oxaloacetate = 5-(3,3-dimethylguanidino)-2-oxopentanoate + L-aspartate. It catalyses the reaction oxaloacetate + L-alanine = L-aspartate + pyruvate. The enzyme catalyses N(omega),N(omega)-dimethyl-L-arginine + 2-oxobutanoate = 5-(3,3-dimethylguanidino)-2-oxopentanoate + (2S)-2-aminobutanoate. It carries out the reaction 2-oxopentanoate + N(omega),N(omega)-dimethyl-L-arginine = 5-(3,3-dimethylguanidino)-2-oxopentanoate + L-2-aminopentanoate. The catalysed reaction is 2-oxohexanoate + N(omega),N(omega)-dimethyl-L-arginine = L-2-aminohexanoate + 5-(3,3-dimethylguanidino)-2-oxopentanoate. Inhibited by 5-fluorouracil and 6-fluorouracil. Inhibited by phenylhydrazine, hydroxylamine, l-amino-L-proline, para-chloromercuribenzoate and HgCl2. In terms of biological role, multifunctional aminotransferase with a broad substrate specificity. Catalyzes the conversion of glyoxylate to glycine using alanine as the amino donor. Catalyzes metabolism of not L- but the D-isomer of D-beta-aminoisobutyric acid to generate 2-methyl-3-oxopropanoate and alanine. Catalyzes the transfer of the amino group from beta-alanine to pyruvate to yield L-alanine and 3-oxopropanoate. Can metabolize NG-monomethyl-L-arginine (NMMA), asymmetric NG,NG-dimethyl-L-arginine (ADMA) and symmetric NG,N'G-dimethyl-L-arginine (SDMA). ADMA is a potent inhibitor of nitric-oxide (NO) synthase, and this activity provides mechanism through which the kidney regulates blood pressure. This chain is Alanine--glyoxylate aminotransferase 2, mitochondrial (Agxt2), found in Rattus norvegicus (Rat).